A 184-amino-acid polypeptide reads, in one-letter code: Vacuolar protein sorting-associated protein 68 (184 aa).

At Met-1 the chain carries N-acetylmethionine. At Ser-8 the chain carries Phosphoserine. A helical membrane pass occupies residues 26–46 (GVYLSGALYALGFWIFLDAVL). Asn-52 carries N-linked (GlcNAc...) asparagine glycosylation. A run of 3 helical transmembrane segments spans residues 56-76 (VHVT…TLIV), 115-135 (LFFG…VLII), and 150-170 (MGVN…VLWI).

This sequence belongs to the UPF0220 family.

The protein resides in the vacuole membrane. It localises to the mitochondrion. In terms of biological role, involved in vacuolar protein sorting. This Saccharomyces cerevisiae (strain ATCC 204508 / S288c) (Baker's yeast) protein is Vacuolar protein sorting-associated protein 68 (VPS68).